Consider the following 221-residue polypeptide: Ribonuclease T (221 aa).

One can recognise an Exonuclease domain in the interval 21-195 (VVIDIESAGF…YDTIQTAYLF (175 aa)). Mg(2+) is bound by residues D24, E26, H182, and D187. The active-site Proton donor/acceptor is the H182.

The protein belongs to the RNase T family. In terms of assembly, homodimer. It depends on Mg(2+) as a cofactor.

Trims short 3' overhangs of a variety of RNA species, leaving a one or two nucleotide 3' overhang. Responsible for the end-turnover of tRNA: specifically removes the terminal AMP residue from uncharged tRNA (tRNA-C-C-A). Also appears to be involved in tRNA biosynthesis. The polypeptide is Ribonuclease T (Buchnera aphidicola subsp. Cinara cedri (strain Cc)).